Here is a 137-residue protein sequence, read N- to C-terminus: uncharacterized protein (137 aa).

This is an uncharacterized protein from Mycobacterium tuberculosis (strain ATCC 25618 / H37Rv).